The following is a 452-amino-acid chain: Methionine aminopeptidase 2 (452 aa).

Positions 1-91 are disordered; that stretch reads MTGVTGTEDT…KNKKKKKKKI (91 aa). A compositionally biased stretch (basic and acidic residues) spans 8–38; that stretch reads EDTKVIESKINELNIDKSKPEKTNKVNKSDD. Acidic residues predominate over residues 39-62; the sequence is VDNDDVDNDDNDDEDNDDDDDEIT. Residues 74–91 are compositionally biased toward basic residues; that stretch reads KKKKKNKNKNKKKKKKKI. Histidine 203 serves as a coordination point for substrate. The a divalent metal cation site is built by aspartate 223, aspartate 234, and histidine 305. A substrate-binding site is contributed by histidine 313. 2 residues coordinate a divalent metal cation: glutamate 338 and glutamate 433.

Belongs to the peptidase M24A family. Methionine aminopeptidase eukaryotic type 2 subfamily. The cofactor is Co(2+). Zn(2+) is required as a cofactor. It depends on Mn(2+) as a cofactor. Fe(2+) serves as cofactor.

Its subcellular location is the cytoplasm. The catalysed reaction is Release of N-terminal amino acids, preferentially methionine, from peptides and arylamides.. Functionally, cotranslationally removes the N-terminal methionine from nascent proteins. The N-terminal methionine is often cleaved when the second residue in the primary sequence is small and uncharged (Met-Ala-, Cys, Gly, Pro, Ser, Thr, or Val). The chain is Methionine aminopeptidase 2 from Candida dubliniensis (strain CD36 / ATCC MYA-646 / CBS 7987 / NCPF 3949 / NRRL Y-17841) (Yeast).